Reading from the N-terminus, the 552-residue chain is Non-structural protein NS1 (552 aa).

Belongs to the orbivirus non-structural protein NS1 family.

This chain is Non-structural protein NS1 (Segment-5), found in Bluetongue virus 10 (isolate USA) (BTV 10).